The following is a 506-amino-acid chain: Beta-glucosidase 9 (506 aa).

An N-terminal signal peptide occupies residues 1-22; it reads MKHFSLLFIFLVILLATSYSDA. Residues Gln42, His139, and 184–185 contribute to the a beta-D-glucoside site; that span reads NE. The active-site Proton donor is Glu185. A disulfide bridge connects residues Cys204 and Cys212. Asn211 and Asn216 each carry an N-linked (GlcNAc...) asparagine glycan. Position 328 (Tyr328) interacts with a beta-D-glucoside. N-linked (GlcNAc...) asparagine glycosylation occurs at Asn363. Position 396 (Glu396) interacts with a beta-D-glucoside. Catalysis depends on Glu396, which acts as the Nucleophile. Residue Asn429 is glycosylated (N-linked (GlcNAc...) asparagine). A beta-D-glucoside-binding residues include Trp439 and Phe455. N-linked (GlcNAc...) asparagine glycosylation is found at Asn461, Asn483, and Asn499.

Belongs to the glycosyl hydrolase 1 family.

The enzyme catalyses Hydrolysis of terminal, non-reducing beta-D-glucosyl residues with release of beta-D-glucose.. The sequence is that of Beta-glucosidase 9 from Arabidopsis thaliana (Mouse-ear cress).